Consider the following 242-residue polypeptide: Enolase-phosphatase E1 (242 aa).

This sequence belongs to the HAD-like hydrolase superfamily. MasA/MtnC family. Monomer. Requires Mg(2+) as cofactor.

It carries out the reaction 5-methylsulfanyl-2,3-dioxopentyl phosphate + H2O = 1,2-dihydroxy-5-(methylsulfanyl)pent-1-en-3-one + phosphate. It participates in amino-acid biosynthesis; L-methionine biosynthesis via salvage pathway; L-methionine from S-methyl-5-thio-alpha-D-ribose 1-phosphate: step 3/6. The protein operates within amino-acid biosynthesis; L-methionine biosynthesis via salvage pathway; L-methionine from S-methyl-5-thio-alpha-D-ribose 1-phosphate: step 4/6. In terms of biological role, bifunctional enzyme that catalyzes the enolization of 2,3-diketo-5-methylthiopentyl-1-phosphate (DK-MTP-1-P) into the intermediate 2-hydroxy-3-keto-5-methylthiopentenyl-1-phosphate (HK-MTPenyl-1-P), which is then dephosphorylated to form the acireductone 1,2-dihydroxy-3-keto-5-methylthiopentene (DHK-MTPene). The sequence is that of Enolase-phosphatase E1 from Synechococcus sp. (strain WH7803).